An 86-amino-acid polypeptide reads, in one-letter code: Weak toxin 3 (86 aa).

Residues 1–23 form the signal peptide; the sequence is MKTLLLTLVVVTIVCLDLGYTLT. Cystine bridges form between cysteine 24–cysteine 45, cysteine 27–cysteine 32, cysteine 38–cysteine 63, cysteine 67–cysteine 78, and cysteine 79–cysteine 84.

This sequence belongs to the three-finger toxin family. Ancestral subfamily. Orphan group II sub-subfamily. Expressed by the venom gland.

It localises to the secreted. Binds with low affinity to muscular (alpha-1-beta-1-delta-epsilon/CHRNA1-CHRNB1-CHRND-CHRNE) and very low affinity to neuronal (alpha-7/CHRNA7) nicotinic acetylcholine receptor (nAChR). The protein is Weak toxin 3 of Bungarus candidus (Malayan krait).